Reading from the N-terminus, the 156-residue chain is ATP synthase subunit b (156 aa).

A helical transmembrane segment spans residues 7–29 (LLGQAIAFALFVWFCMKYVWPPI).

The protein belongs to the ATPase B chain family. As to quaternary structure, F-type ATPases have 2 components, F(1) - the catalytic core - and F(0) - the membrane proton channel. F(1) has five subunits: alpha(3), beta(3), gamma(1), delta(1), epsilon(1). F(0) has three main subunits: a(1), b(2) and c(10-14). The alpha and beta chains form an alternating ring which encloses part of the gamma chain. F(1) is attached to F(0) by a central stalk formed by the gamma and epsilon chains, while a peripheral stalk is formed by the delta and b chains.

It localises to the cell inner membrane. Functionally, f(1)F(0) ATP synthase produces ATP from ADP in the presence of a proton or sodium gradient. F-type ATPases consist of two structural domains, F(1) containing the extramembraneous catalytic core and F(0) containing the membrane proton channel, linked together by a central stalk and a peripheral stalk. During catalysis, ATP synthesis in the catalytic domain of F(1) is coupled via a rotary mechanism of the central stalk subunits to proton translocation. Component of the F(0) channel, it forms part of the peripheral stalk, linking F(1) to F(0). This chain is ATP synthase subunit b, found in Aliivibrio salmonicida (strain LFI1238) (Vibrio salmonicida (strain LFI1238)).